The following is a 604-amino-acid chain: 2-isopropylmalate synthase 2, mitochondrial (604 aa).

A mitochondrion-targeting transit peptide spans 1–50 (MVKHSFIALAEHASKLRRSIPPVKLTYKNMLRDPSVKYRAFAPPKMVKRI). The Pyruvate carboxyltransferase domain occupies 60–335 (PRWLSTDLRD…SPNLDFSDLT (276 aa)). Positions 69, 274, 276, and 310 each coordinate a divalent metal cation.

Belongs to the alpha-IPM synthase/homocitrate synthase family. LeuA type 2 subfamily. In terms of assembly, homodimer. A divalent metal cation serves as cofactor.

The protein localises to the mitochondrion. The catalysed reaction is 3-methyl-2-oxobutanoate + acetyl-CoA + H2O = (2S)-2-isopropylmalate + CoA + H(+). The protein operates within amino-acid biosynthesis; L-leucine biosynthesis; L-leucine from 3-methyl-2-oxobutanoate: step 1/4. Its function is as follows. Catalyzes the condensation of the acetyl group of acetyl-CoA with 3-methyl-2-oxobutanoate (2-oxoisovalerate) to form 3-carboxy-3-hydroxy-4-methylpentanoate (2-isopropylmalate). Redundant to LEU4, responsible for about 20% of alpha-IPMS activity. Involved in leucine synthesis. The protein is 2-isopropylmalate synthase 2, mitochondrial of Saccharomyces cerevisiae (strain ATCC 204508 / S288c) (Baker's yeast).